The chain runs to 283 residues: tRNA dimethylallyltransferase (283 aa).

The segment at 5 to 8 is interaction with substrate tRNA; sequence DSML.

The protein belongs to the IPP transferase family. Monomer. Requires Mg(2+) as cofactor.

The enzyme catalyses adenosine(37) in tRNA + dimethylallyl diphosphate = N(6)-dimethylallyladenosine(37) in tRNA + diphosphate. Functionally, catalyzes the transfer of a dimethylallyl group onto the adenine at position 37 in tRNAs that read codons beginning with uridine, leading to the formation of N6-(dimethylallyl)adenosine (i(6)A). The chain is tRNA dimethylallyltransferase from Desulforamulus reducens (strain ATCC BAA-1160 / DSM 100696 / MI-1) (Desulfotomaculum reducens).